Reading from the N-terminus, the 255-residue chain is Diphthine synthase (255 aa).

Residues Leu9, Asp85, Val88, Ser113 to Ile114, Leu164, Ala207, and His232 contribute to the S-adenosyl-L-methionine site.

Belongs to the diphthine synthase family. In terms of assembly, homodimer.

It carries out the reaction 2-[(3S)-amino-3-carboxypropyl]-L-histidyl-[translation elongation factor 2] + 3 S-adenosyl-L-methionine = diphthine-[translation elongation factor 2] + 3 S-adenosyl-L-homocysteine + 3 H(+). It functions in the pathway protein modification; peptidyl-diphthamide biosynthesis. Functionally, S-adenosyl-L-methionine-dependent methyltransferase that catalyzes the trimethylation of the amino group of the modified target histidine residue in translation elongation factor 2 (EF-2), to form an intermediate called diphthine. The three successive methylation reactions represent the second step of diphthamide biosynthesis. The chain is Diphthine synthase from Methanococcus maripaludis (strain C7 / ATCC BAA-1331).